Here is a 932-residue protein sequence, read N- to C-terminus: Potassium voltage-gated channel subfamily KQT member 5 (932 aa).

At 1-125 (MPRHHAGGEE…YNVLERPRGW (125 aa)) the chain is on the cytoplasmic side. Serine 88 carries the post-translational modification Phosphoserine. A helical membrane pass occupies residues 126–146 (AFIYHAFVFLLVFGCLILSVF). The Extracellular segment spans residues 147–156 (STIPEHTKLA). Residues 157–177 (SSCLLILEFVMIVVFGLEFII) form a helical membrane-spanning segment. The Cytoplasmic portion of the chain corresponds to 178-200 (RIWSAGCCCRYRGWQGRLRFARK). A helical transmembrane segment spans residues 201–221 (PFCVIDTIVLIASIAVVSAKT). At 222–229 (QGNIFATS) the chain is on the extracellular side. Residues 230 to 252 (ALRSLRFLQILRMVRMDRRGGTW) form a helical; Voltage-sensor membrane-spanning segment. 2 residues coordinate a 1,2-diacyl-sn-glycero-3-phospho-(1D-myo-inositol-4,5-bisphosphate): arginine 248 and lysine 264. Over 253–266 (KLLGSVVYAHSKEL) the chain is Cytoplasmic. Residues 267–287 (ITAWYIGFLVLIFSSFLVYLV) form a helical membrane-spanning segment. At 288-298 (EKDANKEFSTY) the chain is on the extracellular side. An intramembrane region (pore-forming) is located at residues 299–319 (ADALWWGTITLTTIGYGDKTP). Residues 320-325 (LTWLGR) are Extracellular-facing. A helical membrane pass occupies residues 326–346 (LLSAGFALLGISFFALPAGIL). Residues 347-932 (GSGFALKVQE…ALSLPHVKLK (586 aa)) lie on the Cytoplasmic side of the membrane. An a 1,2-diacyl-sn-glycero-3-phospho-(1D-myo-inositol-4,5-bisphosphate)-binding site is contributed by lysine 361. An interaction with CALM region spans residues 370 to 378 (AANLIQCVW). The disordered stretch occupies residues 404–465 (SPTKKEQGEA…GSPTKVQKSW (62 aa)). A compositionally biased stretch (polar residues) spans 431–440 (RGQSIKSRQA). Serine 447 carries the phosphoserine modification. Positions 521–528 (VIRAIRIM) are interaction with CALM. Residues 655 to 678 (SDYQSPVDSKDLSGSAQNSGCLSR) form a disordered region. Serine 831 is modified (phosphoserine). Residues 876-885 (VGPEETETDT) show a composition bias toward acidic residues. Positions 876–919 (VGPEETETDTFDAAPQPAREAAFASDSLRTGRSRSSQSICKAGE) are disordered. Over residues 888 to 899 (AAPQPAREAAFA) the composition is skewed to low complexity. Residues 902–914 (SLRTGRSRSSQSI) show a composition bias toward polar residues.

Belongs to the potassium channel family. KQT (TC 1.A.1.15) subfamily. Kv7.5/KCNQ5 sub-subfamily. In terms of assembly, homotetramer; forms a functional homotetrameric channel resulting in the expression of a small M-current. Heterotetramer with KCNQ3; forms heterotetrameric M-channel responsible for the native M-current. Heterotetramer with KCNQ1; forms a functional voltage-gated potassium channel. Interacts (via C-terminus) with calmodulin/CALM1; forms a heterooctameric structure (with 4:4 KCNQ1:CALM stoichiometry); the interaction is calcium-independent, constitutive and participates in the channel function. In terms of tissue distribution, strongly expressed in brain and skeletal muscle. In brain, expressed in cerebral cortex, occipital pole, frontal lobe and temporal lobe. Lower levels in hippocampus and putamen. Low to undetectable levels in medulla, cerebellum and thalamus.

It localises to the cell membrane. The enzyme catalyses K(+)(in) = K(+)(out). With respect to regulation, phosphatidylinositol-4,5-bisphosphate (PIP2) is essential to activate KCNQ5 channel by inducing the coupling of the voltage-sensing domain (VSD) and the pore-forming domain (PD). Calcium suppresses KCNQ5 channel current through calcium-bound CALM C-terminus. Therefore CALM acts as calcium sensor that controls channel activity. Activated by niflumic acid and the anticonvulsant retigabine. Inhibited by barium, linopirdine, XE991 and tetraethylammonium (as homomer). Insensitive to tetraethylammonium in KCNQ3-KCNQ5 heteromers. Its function is as follows. Pore-forming subunit of the voltage-gated potassium (Kv) channel broadly expressed in brain and involved in the regulation of neuronal excitability. Associates with KCNQ3/Kv7.3 pore-forming subunit to form a potassium channel which contributes to M-type current, a slowly activating and deactivating potassium conductance which plays a critical role in determining the subthreshold electrical excitability of neurons. Contributes, with other potassium channels, to the molecular diversity of a heterogeneous population of M-channels, varying in kinetic and pharmacological properties, which underlie this physiologically important current. Also forms a functional channel with KCNQ1/Kv7.1 subunit that may contribute to vasoconstriction and hypertension. Channel may be selectively permeable in vitro to other cations besides potassium, in decreasing order of affinity K(+) = Rb(+) &gt; Cs(+) &gt; Na(+). Similar to the native M-channel, KCNQ3-KCNQ5 potassium channel is suppressed by activation of the muscarinic acetylcholine receptor CHRM1. The protein is Potassium voltage-gated channel subfamily KQT member 5 of Homo sapiens (Human).